The following is a 496-amino-acid chain: Pyrrole-2-carboxylic acid decarboxylase (496 aa).

Position 166 (tryptophan 166) interacts with K(+). Positions 168, 170, 187, and 188 each coordinate prenylated FMN. Histidine 188 is a binding site for Mn(2+). The K(+) site is built by alanine 218, alanine 219, methionine 221, and glutamate 229. Glutamate 229 lines the prenylated FMN pocket. Glutamate 229 is a Mn(2+) binding site. Glutamate 278 (proton donor) is an active-site residue. Residue histidine 386 coordinates prenylated FMN.

This sequence belongs to the UbiD family. UbiD-like/FDC subfamily. In terms of assembly, homodimer. Prenylated FMN serves as cofactor. Requires Mn(2+) as cofactor. The cofactor is K(+).

The enzyme catalyses pyrrole-2-carboxylate + H(+) = 1H-pyrrole + CO2. It catalyses the reaction pyrrole-2-carboxylate + H2O = 1H-pyrrole + hydrogencarbonate. With respect to regulation, imidazole acts as a reversible inhibitor via the formation of an imidazole-prenyl-FMN adduct. Activity is light sensitive. Its function is as follows. Catalyzes the prenyl-FMN-dependent decarboxylation of pyrrole-2-carboxylate (P2C). Can also catalyze the carboxylation of pyrrole in the presence of elevated concentrations of CO(2) or bicarbonate. Can accept a modest range of heteroaromatic compounds such as 3-methylpyrrole-2-carboxylate, indole-3-carboxylate and furan-2-carboxylate, and shows very low activity with thiophene-2-carboxylate. Attenuates the virulence of P.aeruginosa in a Drosophila model when overexpressed. The protein is Pyrrole-2-carboxylic acid decarboxylase of Pseudomonas aeruginosa (strain ATCC 15692 / DSM 22644 / CIP 104116 / JCM 14847 / LMG 12228 / 1C / PRS 101 / PAO1).